Reading from the N-terminus, the 184-residue chain is Large ribosomal subunit protein uL5 (184 aa).

This sequence belongs to the universal ribosomal protein uL5 family. In terms of assembly, part of the 50S ribosomal subunit; part of the 5S rRNA/L5/L18/L25 subcomplex. Contacts the 5S rRNA and the P site tRNA. Forms a bridge to the 30S subunit in the 70S ribosome.

In terms of biological role, this is one of the proteins that bind and probably mediate the attachment of the 5S RNA into the large ribosomal subunit, where it forms part of the central protuberance. In the 70S ribosome it contacts protein S13 of the 30S subunit (bridge B1b), connecting the 2 subunits; this bridge is implicated in subunit movement. Contacts the P site tRNA; the 5S rRNA and some of its associated proteins might help stabilize positioning of ribosome-bound tRNAs. This chain is Large ribosomal subunit protein uL5, found in Syntrophotalea carbinolica (strain DSM 2380 / NBRC 103641 / GraBd1) (Pelobacter carbinolicus).